Consider the following 201-residue polypeptide: Endoribonuclease YbeY (201 aa).

Positions 156, 160, and 166 each coordinate Zn(2+).

This sequence belongs to the endoribonuclease YbeY family. It depends on Zn(2+) as a cofactor.

The protein localises to the cytoplasm. In terms of biological role, single strand-specific metallo-endoribonuclease involved in late-stage 70S ribosome quality control and in maturation of the 3' terminus of the 16S rRNA. This chain is Endoribonuclease YbeY, found in Cupriavidus pinatubonensis (strain JMP 134 / LMG 1197) (Cupriavidus necator (strain JMP 134)).